A 921-amino-acid chain; its full sequence is Protein translocase subunit SecA (921 aa).

ATP-binding positions include Q85, 103-107 (GEGKT), and D514. Residues C905, C907, C916, and H917 each coordinate Zn(2+).

This sequence belongs to the SecA family. As to quaternary structure, monomer and homodimer. Part of the essential Sec protein translocation apparatus which comprises SecA, SecYEG and auxiliary proteins SecDF-YajC and YidC. Zn(2+) serves as cofactor.

The protein resides in the cell inner membrane. The protein localises to the cytoplasm. The catalysed reaction is ATP + H2O + cellular proteinSide 1 = ADP + phosphate + cellular proteinSide 2.. Functionally, part of the Sec protein translocase complex. Interacts with the SecYEG preprotein conducting channel. Has a central role in coupling the hydrolysis of ATP to the transfer of proteins into and across the cell membrane, serving both as a receptor for the preprotein-SecB complex and as an ATP-driven molecular motor driving the stepwise translocation of polypeptide chains across the membrane. The chain is Protein translocase subunit SecA from Herminiimonas arsenicoxydans.